The primary structure comprises 904 residues: MICAL-like protein 2 (904 aa).

Residues 1-107 enclose the Calponin-homology (CH) domain; it reads MAAIRALQQW…YVSQYYNYFH (107 aa). Residues 1-260 form a forms an intramolecular interaction with the C-terminal coiled coil domain keeping the protein in a closed conformation region; it reads MAAIRALQQW…KLTGLVPRQP (260 aa). Serine 110, serine 143, and serine 153 each carry phosphoserine. Residues 117–178 form a disordered region; the sequence is GVKRASEDSE…GGPPPKTDQA (62 aa). The span at 143-153 shows a compositional bias: pro residues; that stretch reads SPAPARKPPLS. Residues 186 to 248 form the LIM zinc-binding domain; sequence STCGVCGKHV…TSHLPAAASA (63 aa). Residue serine 249 is modified to Phosphoserine. Residues 251–722 form a disordered region; it reads KLTGLVPRQP…PANVPALPGE (472 aa). A necessary and sufficient for interaction with actinins region spans residues 261-388; that stretch reads GAMGVDSRTS…GGAPRVAAPQ (128 aa). Residues 261–697 are mediates targeting to the cell plasma membrane; it reads GAMGVDSRTS…EARVQSWKEE (437 aa). A compositionally biased stretch (polar residues) spans 267–277; sequence SRTSCSPQKAQ. Low complexity-rich tracts occupy residues 293–314 and 349–362; these read NSPA…ATSV and SSAA…ASHP. Phosphoserine is present on serine 294. Residues 363-374 show a composition bias toward pro residues; the sequence is AVPPSAPDPRPA. Residues 385–400 show a composition bias toward low complexity; the sequence is AAPQTTLSSSSTSAAT. Positions 408–433 are enriched in polar residues; the sequence is PSASRTQQARNKFFQTSAVPPGTSLS. The segment covering 459–480 has biased composition (low complexity); the sequence is ALSALEEAGAPAPGRPSPATAA. 2 positions are modified to phosphoserine: serine 494 and serine 504. Low complexity-rich tracts occupy residues 520 to 534 and 542 to 553; these read LSTS…LPPA and SSGVGRVGAGSR. A compositionally biased stretch (polar residues) spans 564-578; it reads KSTTLTQDMSTSLQE. Residues 593 to 622 show a composition bias toward basic and acidic residues; sequence PVDRRSPAERTLKPKEPRALAEPRAGEAPR. The residue at position 598 (serine 598) is a Phosphoserine. A Phosphothreonine modification is found at threonine 644. The span at 647 to 661 shows a compositional bias: pro residues; that stretch reads PASPGPSLPARSPSP. 4 positions are modified to phosphoserine: serine 649, serine 658, serine 660, and serine 726. The segment at 698–807 is forms an intramolecular interaction with the N-terminal Calponin-homology and LIM zinc-binding domains-containing region keeping the protein in a closed conformation; the sequence is EKKPHLQGKP…LMYKSKAQRL (110 aa). In terms of domain architecture, bMERB spans 723–874; sequence TVTSPVRLHP…EQEEDQMLRD (152 aa). Positions 735 to 771 form a coiled coil; it reads LSPEEIQRQLQDIERRLDALELRGVELEKRLRAAEGD. The segment at 807 to 903 is mediates interaction with RAB13 and is required for transition from the closed to the opened conformation; the sequence is LEEQQLDIEG…WSPKSKSSPS (97 aa).

Interacts with RAB13 (GTP-bound form); competes with RAB8A and is involved in tight junctions assembly. Interacts with RAB8A; competes with RAB13 and is involved in E-cadherin endocytic recycling. Interacts with RAB8B. Interacts (preferentially in opened conformation) with ACTN1 and ACTN4; stimulated by RAB13 activation. Interacts (via calponin-homology (CH) domain) with the filamins FLNA, FLNB and FLNC (via actin-binding domain).

Its subcellular location is the cell membrane. It is found in the cell junction. The protein resides in the tight junction. It localises to the recycling endosome. The protein localises to the cell projection. Its subcellular location is the cytoplasm. It is found in the cytoskeleton. In terms of biological role, effector of small Rab GTPases which is involved in junctional complexes assembly through the regulation of cell adhesion molecules transport to the plasma membrane and actin cytoskeleton reorganization. Regulates the endocytic recycling of occludins, claudins and E-cadherin to the plasma membrane and may thereby regulate the establishment of tight junctions and adherens junctions. In parallel, may regulate actin cytoskeleton reorganization directly through interaction with F-actin or indirectly through actinins and filamins. Most probably involved in the processes of epithelial cell differentiation, cell spreading and neurite outgrowth. Undergoes liquid-liquid phase separation to form tubular recycling endosomes. Plays 2 sequential roles in the biogenesis of tubular recycling endosomes: first organizes phase separation and then the closed form formed by interaction with RAB8A promotes endosomal tubulation. This chain is MICAL-like protein 2, found in Homo sapiens (Human).